The sequence spans 402 residues: MSRVSQARNLGKYFLLIDNMLVVLGFFVVFPLISIRFVDQMGWAAVMVGIALGLRQFIQQGLGIFGGAIADRFGAKPMIVTGMLMRAAGFATMGIAHEPWLLWFSCFLSGLGGTLFDPPRSALVVKLIRPEQRGRFFSLLMMQDSAGAVIGALLGSWLLQYDFRLVCATGAILFILCALFNAWLLPAWKLSTVRTPVREGMRRVMSDKRFVTYVLTLAGYYMLAVQVMLMLPIMVNDIAGSPAAVKWMYAIEACLSLTLLYPIARWSEKRFRLEHRLMAGLLVMSLSMLPIGMVGNLQQLFTLICAFYIGSVIAEPARETLSASLADARARGSYMGFSRLGLAIGGAIGYIGGGWLFDMGKALAQPELPWMMLGIIGFITFLALGWQFSHKRTPRRMLEPGA.

Residues 1–12 (MSRVSQARNLGK) are Cytoplasmic-facing. A helical membrane pass occupies residues 13–33 (YFLLIDNMLVVLGFFVVFPLI). Over 34-98 (SIRFVDQMGW…GFATMGIAHE (65 aa)) the chain is Periplasmic. Residues 99–116 (PWLLWFSCFLSGLGGTLF) form a helical membrane-spanning segment. The Cytoplasmic segment spans residues 117–138 (DPPRSALVVKLIRPEQRGRFFS). A helical transmembrane segment spans residues 139–159 (LLMMQDSAGAVIGALLGSWLL). Topologically, residues 160–164 (QYDFR) are periplasmic. A helical transmembrane segment spans residues 165 to 185 (LVCATGAILFILCALFNAWLL). The Cytoplasmic portion of the chain corresponds to 186–213 (PAWKLSTVRTPVREGMRRVMSDKRFVTY). A helical membrane pass occupies residues 214–234 (VLTLAGYYMLAVQVMLMLPIM). Residues 235 to 243 (VNDIAGSPA) are Periplasmic-facing. A helical membrane pass occupies residues 244–264 (AVKWMYAIEACLSLTLLYPIA). The Cytoplasmic segment spans residues 265-276 (RWSEKRFRLEHR). Residues 277-297 (LMAGLLVMSLSMLPIGMVGNL) form a helical membrane-spanning segment. The Periplasmic portion of the chain corresponds to 298–299 (QQ). The helical transmembrane segment at 300 to 320 (LFTLICAFYIGSVIAEPARET) threads the bilayer. The Cytoplasmic segment spans residues 321–339 (LSASLADARARGSYMGFSR). Residues 340-360 (LGLAIGGAIGYIGGGWLFDMG) traverse the membrane as a helical segment. The Periplasmic portion of the chain corresponds to 361–367 (KALAQPE). The helical transmembrane segment at 368–388 (LPWMMLGIIGFITFLALGWQF) threads the bilayer. Topologically, residues 389-402 (SHKRTPRRMLEPGA) are cytoplasmic.

The protein belongs to the major facilitator superfamily. DHA1 family. MdtH (TC 2.A.1.2.21) subfamily.

It is found in the cell inner membrane. The chain is Multidrug resistance protein MdtH from Salmonella agona (strain SL483).